The sequence spans 218 residues: Adenylate kinase (218 aa).

ATP is bound at residue 10–15; sequence GAGKGT. The NMP stretch occupies residues 30–59; sequence STGDMLRAAINEGTPLGLEAKKVMDAGKLV. AMP-binding positions include Thr-31, Arg-36, 57-59, 85-88, and Gln-92; these read KLV and GFPR. Positions 122–159 are LID; sequence GRRVHPASGRTYHVLFNPPAKEGVDDITGDPLVQREDD. Residues Arg-123 and 132–133 each bind ATP; that span reads TY. Residues Arg-156 and Arg-167 each coordinate AMP. Gly-203 provides a ligand contact to ATP.

The protein belongs to the adenylate kinase family. As to quaternary structure, monomer.

The protein localises to the cytoplasm. It carries out the reaction AMP + ATP = 2 ADP. It participates in purine metabolism; AMP biosynthesis via salvage pathway; AMP from ADP: step 1/1. Functionally, catalyzes the reversible transfer of the terminal phosphate group between ATP and AMP. Plays an important role in cellular energy homeostasis and in adenine nucleotide metabolism. This Chlorobium phaeobacteroides (strain BS1) protein is Adenylate kinase.